We begin with the raw amino-acid sequence, 678 residues long: Penicillin-binding protein activator LpoA (678 aa).

Residues 1 to 26 form the signal peptide; it reads MVPSTFSRLKAARCLPVVLAALIFAG. Cysteine 27 carries N-palmitoyl cysteine lipidation. The S-diacylglycerol cysteine moiety is linked to residue cysteine 27. Positions 300-310 are enriched in low complexity; it reads AADVAEQPQPQ. Disordered regions lie at residues 300–340 and 496–528; these read AADV…PVSA and ALTG…DDQF. The span at 311-327 shows a compositional bias: polar residues; that stretch reads TADSVASPAQASVSDLT. Low complexity-rich tracts occupy residues 330 to 340 and 513 to 528; these read QPAAQPVPVSA and TTNN…DDQF.

Belongs to the LpoA family. In terms of assembly, interacts with PBP1a.

Its subcellular location is the cell outer membrane. Its function is as follows. Regulator of peptidoglycan synthesis that is essential for the function of penicillin-binding protein 1A (PBP1a). This chain is Penicillin-binding protein activator LpoA, found in Shigella flexneri serotype X (strain 2002017).